A 118-amino-acid chain; its full sequence is V-type proton ATPase subunit G 1 (118 aa).

Position 2 is an N-acetylalanine (Ala-2). Positions 55–90 are disordered; it reads FQSKQQAAMGSQGNLSAEVEQATRRQVQGMQSSQQR. Polar residues-rich tracts occupy residues 56–69 and 78–89; these read QSKQ…QGNL and RRQVQGMQSSQQ.

It belongs to the V-ATPase G subunit family. V-ATPase is a heteromultimeric enzyme made up of two complexes: the ATP-hydrolytic V1 complex and the proton translocation V0 complex. The V1 complex consists of three catalytic AB heterodimers that form a heterohexamer, three peripheral stalks each consisting of EG heterodimers, one central rotor including subunits D and F, and the regulatory subunits C and H. The proton translocation complex V0 consists of the proton transport subunit a, a ring of proteolipid subunits c9c'', rotary subunit d, subunits e and f, and the accessory subunits ATP6AP1/Ac45 and ATP6AP2/PRR.

The protein localises to the apical cell membrane. In terms of biological role, subunit of the V1 complex of vacuolar(H+)-ATPase (V-ATPase), a multisubunit enzyme composed of a peripheral complex (V1) that hydrolyzes ATP and a membrane integral complex (V0) that translocates protons. V-ATPase is responsible for acidifying and maintaining the pH of intracellular compartments and in some cell types, is targeted to the plasma membrane, where it is responsible for acidifying the extracellular environment. In aerobic conditions, involved in intracellular iron homeostasis, thus triggering the activity of Fe(2+) prolyl hydroxylase (PHD) enzymes, and leading to HIF1A hydroxylation and subsequent proteasomal degradation. The protein is V-type proton ATPase subunit G 1 (ATP6V1G1) of Canis lupus familiaris (Dog).